Reading from the N-terminus, the 936-residue chain is Phosphoenolpyruvate carboxylase (936 aa).

Catalysis depends on residues H155 and K595.

Belongs to the PEPCase type 1 family. In terms of assembly, homotetramer. Requires Mg(2+) as cofactor. It depends on Mn(2+) as a cofactor.

The catalysed reaction is oxaloacetate + phosphate = phosphoenolpyruvate + hydrogencarbonate. Its activity is regulated as follows. Exhibits positive allosteric property with acetyl-CoA and fructose 1,6-bisphosphate, and a negative one with L-aspartate and L-malate. Functionally, forms oxaloacetate, a four-carbon dicarboxylic acid source for the tricarboxylic acid cycle. The sequence is that of Phosphoenolpyruvate carboxylase (ppc) from Rhodothermus marinus (Rhodothermus obamensis).